Here is a 173-residue protein sequence, read N- to C-terminus: bZIP transcription factor 44 (173 aa).

Residues Met-1–Asp-65 form a disordered region. Residues Gly-8 to Gly-22 show a composition bias toward low complexity. Residues Ser-30–Arg-41 show a composition bias toward basic and acidic residues. Positions Asp-39–Leu-102 constitute a bZIP domain. The interval Arg-41 to Lys-62 is basic motif. The tract at residues Leu-67–Ile-81 is leucine-zipper.

As to quaternary structure, forms heterodimers with BZIP1, BZIP9, BZIP10, BZIP25 and BZIP63. As to expression, expressed in the micropylar endosperm and radicle tip in early germinating seeds.

Its subcellular location is the nucleus. In terms of biological role, transcription factor that binds to the DNA G-box motif 5'-CACGTG-3' of MAN7 promoter. Involved in the positive regulation of seed germination through MAN7 gene activation. MAN7 is required for both, loosening of the micropylar endosperm, and rupture of the seed coat in germinating seeds. The polypeptide is bZIP transcription factor 44 (Arabidopsis thaliana (Mouse-ear cress)).